Here is a 1878-residue protein sequence, read N- to C-terminus: DNA polymerase (1878 aa).

Disordered stretches follow at residues 691–727 (LFQA…KGPN) and 1839–1878 (TQDD…GTMF). The span at 694 to 709 (ADDDDDDDDEDEDDGL) shows a compositional bias: acidic residues. Residues 710 to 723 (LDERQQDSAEDMKK) are compositionally biased toward basic and acidic residues. Low complexity predominate over residues 1868–1878 (ITAGKTAGTMF).

Belongs to the DNA polymerase type-B family.

The enzyme catalyses DNA(n) + a 2'-deoxyribonucleoside 5'-triphosphate = DNA(n+1) + diphosphate. The polypeptide is DNA polymerase (Magallana gigas (Pacific oyster)).